The primary structure comprises 491 residues: Glutamyl-tRNA(Gln) amidotransferase subunit A (491 aa).

Catalysis depends on charge relay system residues Lys-81 and Ser-156. The Acyl-ester intermediate role is filled by Ser-180.

Belongs to the amidase family. GatA subfamily. Heterotrimer of A, B and C subunits.

The enzyme catalyses L-glutamyl-tRNA(Gln) + L-glutamine + ATP + H2O = L-glutaminyl-tRNA(Gln) + L-glutamate + ADP + phosphate + H(+). Functionally, allows the formation of correctly charged Gln-tRNA(Gln) through the transamidation of misacylated Glu-tRNA(Gln) in organisms which lack glutaminyl-tRNA synthetase. The reaction takes place in the presence of glutamine and ATP through an activated gamma-phospho-Glu-tRNA(Gln). This Alcanivorax borkumensis (strain ATCC 700651 / DSM 11573 / NCIMB 13689 / SK2) protein is Glutamyl-tRNA(Gln) amidotransferase subunit A.